Here is an 86-residue protein sequence, read N- to C-terminus: Mitochondrial import inner membrane translocase subunit Tim10 (86 aa).

Positions 29-54 (CQAKCIATAFKESELTKGEAVCLDRC) match the Twin CX3C motif motif. 2 cysteine pairs are disulfide-bonded: Cys29–Cys54 and Cys33–Cys50.

Belongs to the small Tim family. In terms of assembly, heterohexamer; composed of 3 copies of tim-9/tin-9.1 and 3 copies of tim-10/tin-10, named soluble 70 kDa complex. The complex associates with the tim-22 component of the TIM22 complex. Interacts with multi-pass transmembrane proteins in transit.

It is found in the mitochondrion inner membrane. Its function is as follows. Mitochondrial intermembrane chaperone that participates in the import and insertion of multi-pass transmembrane proteins into the mitochondrial inner membrane. May also be required for the transfer of beta-barrel precursors from the TOM complex to the sorting and assembly machinery (SAM complex) of the outer membrane. Acts as a chaperone-like protein that protects the hydrophobic precursors from aggregation and guide them through the mitochondrial intermembrane space. This is Mitochondrial import inner membrane translocase subunit Tim10 (tin-10) from Caenorhabditis briggsae.